Here is a 2339-residue protein sequence, read N- to C-terminus: Inverse autotransporter adhesin YeeJ (2339 aa).

The N-terminal stretch at 1 to 26 is a signal peptide; it reads MGIKLRRLTAGICLITQLAFPMAAAA. A LysM domain is found at 50–98; sequence VPYTLGALESAQSVAERFGISVAELRKLNQFRTFARGFDNVRQGDELDV. Residues 125 to 400 form an inverse autotransporter region; it reads TSQQIGSLLA…SRYDLVDRNN (276 aa). Residues 513 to 605 form an invasin 3 domain region; it reads QKDSSVSLST…GVDAAKAPAV (93 aa). Big-1 domains lie at 721-815, 822-913, 920-1017, 1024-1121, 1128-1221, 1229-1331, 1339-1432, 1439-1535, 1542-1639, 1646-1730, 1746-1837, 1840-1934, and 1942-2034; these read IATL…VSFV, QVDL…VNFI, ALTL…MTFV, VVVL…VTFV, QVVL…VHFI, IIEL…SINV, HLTL…VTYV, EITL…VNFI, QVNL…VTLI, KLAS…PTEV, ITSL…LEAI, KLTL…VKVT, and VASF…ITLV. Residues 2236-2339 are C-type lectin domain; the sequence is KSWWVNAGEA…FAYATCYKNL (104 aa).

Belongs to the intimin/invasin family.

The protein resides in the cell outer membrane. In terms of biological role, a cryptic inverse autotransporter, it is not expressed in wild-type strain MG1655. Upon overexpression shows increased adherence to polyvinyl chloride (PVC) plates and increased mature biofilm formation. Probably binds peptidoglycan. The polypeptide is Inverse autotransporter adhesin YeeJ (yeeJ) (Escherichia coli (strain K12)).